Here is a 701-residue protein sequence, read N- to C-terminus: Lutropin-choriogonadotropic hormone receptor (701 aa).

An N-terminal signal peptide occupies residues 1 to 26; sequence MGRPSLALRLLLALLLLPPPAPLLWA. The Extracellular portion of the chain corresponds to 27-365; the sequence is LRPAPCPEPC…EDIMGYNFLR (339 aa). N101 is a glycosylation site (N-linked (GlcNAc...) asparagine). 6 LRR repeats span residues 124–149, 151–173, 174–198, 200–222, 223–246, and 250–271; these read LPRLKYLSICNTGIHKLPDVTKIFSS, FNFILEICDNLHITTIPRNAFQG, MNNESITLKLYGNGFEEIQSHAFNG, TLISLELKENARLEKMHNDAFRG, ATGPSILDISSTKLQALPTYGLES, and LIATSSYSLKKLPSREKFTNLL. N-linked (GlcNAc...) asparagine glycans are attached at residues N176 and N197. N293, N301, and N315 each carry an N-linked (GlcNAc...) asparagine glycan. Y333 is subject to Sulfotyrosine. The helical transmembrane segment at 366-387 threads the bilayer; that stretch reads VLIWLINILAITGNVTVLFVLL. Residues 388-397 are Cytoplasmic-facing; it reads TSRYKLTVPR. The chain crosses the membrane as a helical span at residues 398 to 418; sequence FLMCNLSFADFCMGLYLLLIA. Topologically, residues 419–441 are extracellular; sequence SVDAQTKGQYYNHAIDWQTGSGC. C441 and C516 are disulfide-bonded. Residues 442-464 form a helical membrane-spanning segment; sequence SAAGFFTVFASELSVYTLTVITL. Topologically, residues 465–484 are cytoplasmic; that stretch reads ERWHTITYAIQLDQKLRLKH. Residues 485 to 507 traverse the membrane as a helical segment; the sequence is AIPVMLGGWLFSTLIAVLPLVGV. The Extracellular portion of the chain corresponds to 508 to 527; that stretch reads SNYMKVSICLPMDVESTLSQ. A helical transmembrane segment spans residues 528 to 551; that stretch reads VYILTILILNVMAFIIICACYIKI. Residues 552–572 are Cytoplasmic-facing; that stretch reads YFAVQNPELMATNKDTKIAKK. The chain crosses the membrane as a helical span at residues 573-596; sequence MAVLIFTDFTCMAPISFFAISAAF. The Extracellular portion of the chain corresponds to 597 to 607; that stretch reads KVPLITVTNSK. A helical transmembrane segment spans residues 608–629; that stretch reads VLLVLFYPVNSCANPFLYAIFT. At 630–701 the chain is on the cytoplasmic side; that stretch reads KAFQRDFFLL…VLDKTCYKEC (72 aa). Residues C645 and C646 are each lipidated (S-palmitoyl cysteine).

This sequence belongs to the G-protein coupled receptor 1 family. FSH/LSH/TSH subfamily. Sulfated.

It localises to the cell membrane. Functionally, receptor for lutropin-choriogonadotropic hormone. The activity of this receptor is mediated by G proteins which activate adenylate cyclase. This Bos taurus (Bovine) protein is Lutropin-choriogonadotropic hormone receptor (LHCGR).